The primary structure comprises 207 residues: Large ribosomal subunit protein uL4 (207 aa).

A disordered region spans residues 59 to 78; the sequence is GSGKKPFKQKGTGQARQGCK.

Belongs to the universal ribosomal protein uL4 family. Part of the 50S ribosomal subunit.

In terms of biological role, one of the primary rRNA binding proteins, this protein initially binds near the 5'-end of the 23S rRNA. It is important during the early stages of 50S assembly. It makes multiple contacts with different domains of the 23S rRNA in the assembled 50S subunit and ribosome. Its function is as follows. Forms part of the polypeptide exit tunnel. This chain is Large ribosomal subunit protein uL4, found in Geotalea daltonii (strain DSM 22248 / JCM 15807 / FRC-32) (Geobacter daltonii).